The primary structure comprises 238 residues: B-box zinc finger protein 25 (238 aa).

Zn(2+) is bound by residues Cys-5, Cys-8, Cys-28, His-33, Cys-57, Cys-60, Cys-80, and His-85. Residues 5–47 (CDVCEKAPATLICCADEAALCAKCDVEVHAANKLASKHQRLFL) form a B box-type 1; atypical zinc finger. A B box-type 2; atypical zinc finger spans residues 57–99 (CDICLEKAAFIFCVEDRALLCRDCDEATHAPNTRSANHQRFLA). The disordered stretch occupies residues 115–139 (VEKNHFDPSNQQSLSKPPTQQPAAP). A compositionally biased stretch (polar residues) spans 121 to 137 (DPSNQQSLSKPPTQQPA). The interval 226-238 (DDEEEHFLVPDLG) is interaction with COP1.

In terms of assembly, interacts with COP1 WD40 domain. Interacts with HY5 and HYH. COP1-mediated ubiquitination and subsequent proteasomal degradation of BBX25/STH occurs in the dark.

It is found in the nucleus. Acts as a negative regulator of seedling photomorphogenesis. BBX25/STH and BBX24/STO function as transcriptional corepressors of HY5 activity, leading to the down-regulation of BBX22 expression. BBX25/STH acts additively with BBX24/STO during de-etiolation and the hypocotyl shade avoidance response. The polypeptide is B-box zinc finger protein 25 (Arabidopsis thaliana (Mouse-ear cress)).